The following is a 374-amino-acid chain: Cobalt-precorrin-5B C(1)-methyltransferase (374 aa).

Belongs to the CbiD family.

It carries out the reaction Co-precorrin-5B + S-adenosyl-L-methionine = Co-precorrin-6A + S-adenosyl-L-homocysteine. The protein operates within cofactor biosynthesis; adenosylcobalamin biosynthesis; cob(II)yrinate a,c-diamide from sirohydrochlorin (anaerobic route): step 6/10. Catalyzes the methylation of C-1 in cobalt-precorrin-5B to form cobalt-precorrin-6A. The sequence is that of Cobalt-precorrin-5B C(1)-methyltransferase from Synechococcus elongatus (strain ATCC 33912 / PCC 7942 / FACHB-805) (Anacystis nidulans R2).